The following is an 89-amino-acid chain: SADLALGKQTFEANCAACHAGGNNSVIPDHTLRKAAMEQFLQGGFNLEAITYQVENGKGAMPAWSGTLDDDEIAAVAAYVYDQASGDKW.

Heme c contacts are provided by Cys-15, Cys-18, His-19, and Met-61.

The protein belongs to the cytochrome c family. PetJ subfamily. As to quaternary structure, monomer. Binds 1 heme c group covalently per subunit.

The protein resides in the plastid. The protein localises to the chloroplast thylakoid lumen. Its function is as follows. Functions as an electron carrier between membrane-bound cytochrome b6-f and photosystem I in oxygenic photosynthesis. In Tetradesmus obliquus (Green alga), this protein is Cytochrome c6 (petJ).